A 302-amino-acid chain; its full sequence is Deoxyhypusine hydroxylase (302 aa).

Met-1 bears the N-acetylmethionine mark. HEAT-like PBS-type repeat units lie at residues 54 to 80 (LKHELAYCLGQMRDPRAIPVLVSVLQD), 87 to 113 (VRHEAGEALGAIGNPKVLGLLKQYSTD), 175 to 201 (ERYRAMFALRNVGGKEAALALAEGLKC), 206 to 232 (FRHEVGYVLGQLQHEAAVSELAATLAR), and 239 to 265 (VRHECAEALGAIARPACLAALREYITD). Positions 56, 89, and 90 each coordinate Fe cation. 3 residues coordinate Fe cation: His-208, His-241, and Glu-242.

It belongs to the deoxyhypusine hydroxylase family. Fe(2+) serves as cofactor.

It catalyses the reaction [eIF5A protein]-deoxyhypusine + AH2 + O2 = [eIF5A protein]-hypusine + A + H2O. The protein operates within protein modification; eIF5A hypusination. In terms of biological role, catalyzes the hydroxylation of the N(6)-(4-aminobutyl)-L-lysine intermediate produced by deoxyhypusine synthase/DHPS on a critical lysine of the eukaryotic translation initiation factor 5A/eIF-5A. This is the second step of the post-translational modification of that lysine into an unusual amino acid residue named hypusine. Hypusination is unique to mature eIF-5A factor and is essential for its function. This Rattus norvegicus (Rat) protein is Deoxyhypusine hydroxylase (Dohh).